The primary structure comprises 175 residues: Translation initiation factor IF-3 (175 aa).

This sequence belongs to the IF-3 family. In terms of assembly, monomer.

The protein localises to the cytoplasm. In terms of biological role, IF-3 binds to the 30S ribosomal subunit and shifts the equilibrium between 70S ribosomes and their 50S and 30S subunits in favor of the free subunits, thus enhancing the availability of 30S subunits on which protein synthesis initiation begins. The chain is Translation initiation factor IF-3 from Staphylococcus aureus (strain MRSA252).